The chain runs to 425 residues: Serine hydroxymethyltransferase (425 aa).

Residues leucine 128 and 132-134 contribute to the (6S)-5,6,7,8-tetrahydrofolate site; that span reads GHL. At lysine 237 the chain carries N6-(pyridoxal phosphate)lysine.

The protein belongs to the SHMT family. In terms of assembly, homodimer. Pyridoxal 5'-phosphate serves as cofactor.

Its subcellular location is the cytoplasm. The enzyme catalyses (6R)-5,10-methylene-5,6,7,8-tetrahydrofolate + glycine + H2O = (6S)-5,6,7,8-tetrahydrofolate + L-serine. It participates in one-carbon metabolism; tetrahydrofolate interconversion. The protein operates within amino-acid biosynthesis; glycine biosynthesis; glycine from L-serine: step 1/1. Catalyzes the reversible interconversion of serine and glycine with tetrahydrofolate (THF) serving as the one-carbon carrier. This reaction serves as the major source of one-carbon groups required for the biosynthesis of purines, thymidylate, methionine, and other important biomolecules. Also exhibits THF-independent aldolase activity toward beta-hydroxyamino acids, producing glycine and aldehydes, via a retro-aldol mechanism. In Wolbachia pipientis subsp. Culex pipiens (strain wPip), this protein is Serine hydroxymethyltransferase.